Reading from the N-terminus, the 489-residue chain is Corticosteroid-binding protein (489 aa).

The protein to yeast FMS1.

Its function is as follows. May be a flavoprotein with enzymatic activity. The polypeptide is Corticosteroid-binding protein (CBP1) (Candida albicans (strain SC5314 / ATCC MYA-2876) (Yeast)).